The following is a 316-amino-acid chain: Porphobilinogen deaminase (316 aa).

Cys-249 is modified (S-(dipyrrolylmethanemethyl)cysteine).

Belongs to the HMBS family. Monomer. Dipyrromethane serves as cofactor.

It carries out the reaction 4 porphobilinogen + H2O = hydroxymethylbilane + 4 NH4(+). Its pathway is porphyrin-containing compound metabolism; protoporphyrin-IX biosynthesis; coproporphyrinogen-III from 5-aminolevulinate: step 2/4. Tetrapolymerization of the monopyrrole PBG into the hydroxymethylbilane pre-uroporphyrinogen in several discrete steps. The polypeptide is Porphobilinogen deaminase (Nitrobacter hamburgensis (strain DSM 10229 / NCIMB 13809 / X14)).